The chain runs to 535 residues: Sucrose transport protein SUT5 (535 aa).

At 1–53 (MEEGRRGDREAKSAAGWTALSTTKTTLEEKRRLQANGSVGGDAGTSGFRRIVR) the chain is on the cytoplasmic side. A helical transmembrane segment spans residues 54–74 (LFFACMVAGGIQYGWALQLSL). Residues 75-87 (LSPYSQTLGISHS) lie on the Extracellular side of the membrane. The helical transmembrane segment at 88 to 108 (YVSLTWICGPIAGFVVQPIVG) threads the bilayer. The Cytoplasmic portion of the chain corresponds to 109 to 122 (YYSDRCTMKMGRRR). A helical transmembrane segment spans residues 123–143 (PFILVGCLIICISVMIIGFSA). Residues 144 to 163 (DIGRHLGDTKEHCSTYTGPR) are Extracellular-facing. The helical transmembrane segment at 164–184 (WSAAMVYIVGFWFLDFANNTV) threads the bilayer. Over 185-203 (QGPARAMMADLSAGHHGPN) the chain is Cytoplasmic. A helical transmembrane segment spans residues 204–224 (VGQSIFSLWMAIGSVLGYLSG). The Extracellular portion of the chain corresponds to 225–249 (ANGKWHEWFPWLKTAACCDACANLK). The chain crosses the membrane as a helical span at residues 250–270 (GAFFTAVLLIVVSMTVTMYLA). At 271 to 302 (DEMPLDKQDVDTSGGGGCAVFVDLFKSLRNLP) the chain is on the cytoplasmic side. The helical transmembrane segment at 303–323 (PAMFKVLAVTAVTWLSWFPFI) threads the bilayer. Over 324–354 (QYNTDWMGREIYHGEPQGTAAKADVYDAGVR) the chain is Extracellular. A helical membrane pass occupies residues 355–375 (EGAMGLLFCSVALGVTSFVIP). Residues 376-384 (KLCRRLTSK) lie on the Cytoplasmic side of the membrane. Residues 385-405 (VVWSISNFLVFALMAVMVAVG) form a helical membrane-spanning segment. The Extracellular segment spans residues 406-429 (MVSMRGYRPSLAAGLTGPDPTLKA). Residues 430–450 (VALVVFALIGIPQAVLFSVPW) traverse the membrane as a helical segment. The Cytoplasmic portion of the chain corresponds to 451 to 465 (AVASEVTAEEGGGQG). Residues 466-486 (LAIGVLNIAIVVPQLVIALTA) form a helical membrane-spanning segment. Over 487-498 (GPIDGAFNKGNT) the chain is Extracellular. Residues 499 to 519 (PAFGIGGAFAFICGVLALIWL) form a helical membrane-spanning segment. Topologically, residues 520–535 (PKTRGVSNAAVVAGGH) are cytoplasmic.

It belongs to the glycoside-pentoside-hexuronide (GPH) cation symporter transporter (TC 2.A.2.4) family. Homodimer.

It is found in the cell membrane. The protein operates within glycan biosynthesis; sucrose metabolism. Functionally, responsible for the transport of sucrose into the cell, with the concomitant uptake of protons (symport system). May also transport other glucosides. The sequence is that of Sucrose transport protein SUT5 (SUT5) from Oryza sativa subsp. indica (Rice).